Reading from the N-terminus, the 895-residue chain is La RNA-binding domain-containing protein LHP1 (895 aa).

Disordered stretches follow at residues 24-265 (ANGN…PPPS), 285-344 (SATS…HDAT), 359-590 (GEDK…LGHG), 796-857 (PDAA…AQDV), and 870-895 (VNGEIKEKEEVKAMENEGEESENYEQ). Low complexity predominate over residues 31–75 (SSPSSSSSATPEPTSLSSSTSGKKAFSTATSKSGQQKQGSSPQPG). Positions 95 to 143 (QRTDRSEEKEKRGSSSKNWRERSHRDEKNQDDGEKRNGRERSKKEKGDK) are enriched in basic and acidic residues. The segment covering 152–170 (SATSSEKTAKSLSSSTKNA) has biased composition (low complexity). Composition is skewed to polar residues over residues 172 to 184 (GVTSSSQGENPIA) and 192 to 216 (KAQNDSTFRSSSAAAPVGPTTSTIN). Over residues 228–244 (DNWRARPAKVEKNEKTE) the composition is skewed to basic and acidic residues. The segment covering 251-260 (QAQPQPQRQL) has biased composition (low complexity). The span at 296-314 (KSDKEKSLTNGMVKEEDSG) shows a compositional bias: basic and acidic residues. Residues 325 to 336 (AAAAAAAGTSST) are compositionally biased toward low complexity. Basic and acidic residues-rich tracts occupy residues 359–371 (GEDKKEKAKERLN), 405–428 (HAAEQSRRQNRMEAKKRSSGREGG), 452–468 (EGKKARKEGAQQKDGHA), and 485–495 (GDVKETKEGDA). A compositionally biased stretch (low complexity) spans 496 to 508 (RSASQQESSSHRS). A compositionally biased stretch (polar residues) spans 510-521 (PSISASANTGID). Over residues 563–572 (RGSFGGGRAR) the composition is skewed to gly residues. In terms of domain architecture, HTH La-type RNA-binding spans 706–796 (VPNLDPLRFY…GAESHRWVLP (91 aa)). Serine 847 is modified (phosphoserine). Basic and acidic residues predominate over residues 873–884 (EIKEKEEVKAME). Acidic residues predominate over residues 885–895 (NEGEESENYEQ).

Functionally, may act as an RNA-binding protein. This is La RNA-binding domain-containing protein LHP1 from Cryptococcus neoformans var. grubii serotype A (strain H99 / ATCC 208821 / CBS 10515 / FGSC 9487) (Filobasidiella neoformans var. grubii).